We begin with the raw amino-acid sequence, 553 residues long: Dihydroxy-acid dehydratase (553 aa).

A Mg(2+)-binding site is contributed by Asp78. Cys119 provides a ligand contact to [2Fe-2S] cluster. Residues Asp120 and Lys121 each coordinate Mg(2+). Position 121 is an N6-carboxylysine (Lys121). [2Fe-2S] cluster is bound at residue Cys193. Residue Glu441 participates in Mg(2+) binding. Ser467 (proton acceptor) is an active-site residue.

Belongs to the IlvD/Edd family. As to quaternary structure, homodimer. [2Fe-2S] cluster is required as a cofactor. Requires Mg(2+) as cofactor.

The enzyme catalyses (2R)-2,3-dihydroxy-3-methylbutanoate = 3-methyl-2-oxobutanoate + H2O. The catalysed reaction is (2R,3R)-2,3-dihydroxy-3-methylpentanoate = (S)-3-methyl-2-oxopentanoate + H2O. The protein operates within amino-acid biosynthesis; L-isoleucine biosynthesis; L-isoleucine from 2-oxobutanoate: step 3/4. It functions in the pathway amino-acid biosynthesis; L-valine biosynthesis; L-valine from pyruvate: step 3/4. Functionally, functions in the biosynthesis of branched-chain amino acids. Catalyzes the dehydration of (2R,3R)-2,3-dihydroxy-3-methylpentanoate (2,3-dihydroxy-3-methylvalerate) into 2-oxo-3-methylpentanoate (2-oxo-3-methylvalerate) and of (2R)-2,3-dihydroxy-3-methylbutanoate (2,3-dihydroxyisovalerate) into 2-oxo-3-methylbutanoate (2-oxoisovalerate), the penultimate precursor to L-isoleucine and L-valine, respectively. The sequence is that of Dihydroxy-acid dehydratase from Geotalea daltonii (strain DSM 22248 / JCM 15807 / FRC-32) (Geobacter daltonii).